The chain runs to 190 residues: Ribonuclease HII (190 aa).

An RNase H type-2 domain is found at 3-190; sequence KLIAGVDEVG…KPVKALLEEK (188 aa). The a divalent metal cation site is built by Asp9, Glu10, and Asp101.

Belongs to the RNase HII family. Mn(2+) is required as a cofactor. The cofactor is Mg(2+).

It localises to the cytoplasm. The enzyme catalyses Endonucleolytic cleavage to 5'-phosphomonoester.. Functionally, endonuclease that specifically degrades the RNA of RNA-DNA hybrids. This Alteromonas mediterranea (strain DSM 17117 / CIP 110805 / LMG 28347 / Deep ecotype) protein is Ribonuclease HII.